We begin with the raw amino-acid sequence, 731 residues long: Inducible ornithine decarboxylase (731 aa).

K356 carries the N6-(pyridoxal phosphate)lysine modification.

This sequence belongs to the Orn/Lys/Arg decarboxylase class-I family. Dodecamer. The cofactor is pyridoxal 5'-phosphate.

It carries out the reaction L-ornithine + H(+) = putrescine + CO2. The sequence is that of Inducible ornithine decarboxylase (odcI) from Lactobacillus sp. (strain 30a).